A 1214-amino-acid chain; its full sequence is Spliceosome-associated protein 130 A (1214 aa).

The segment at 817 to 848 is disordered; it reads AGGVGENGNGNADQMENGADDEDKEDPLSDEQ. Residues 834-845 show a composition bias toward acidic residues; that stretch reads GADDEDKEDPLS.

This sequence belongs to the RSE1 family. In terms of assembly, identified in the spliceosome C complex. Component of the U11/U12 snRNPs that are part of the U12-type spliceosome. Component of splicing factor SF3B complex. Expressed at low levels in roots, leaves, inflorescence and, to a lower extent, in siliques.

It is found in the nucleus. In terms of biological role, subunit of the splicing factor SF3B required for 'A' complex assembly formed by the stable binding of U2 snRNP to the branchpoint sequence (BPS) in pre-mRNA. Sequence independent binding of SF3A/SF3B complex upstream of the branch site is essential, it may anchor U2 snRNP to the pre-mRNA. May also be involved in the assembly of the 'E' complex. Also belongs to the minor U12-dependent spliceosome, which is involved in the splicing of rare class of nuclear pre-mRNA intron. Required for pollen and ovule development, especially during the transition from microspore to the bicellular stage in pollen development. Involved in the accumulation of QRT1 and QRT3. In Arabidopsis thaliana (Mouse-ear cress), this protein is Spliceosome-associated protein 130 A.